A 638-amino-acid chain; its full sequence is 1,4-alpha-glucan branching enzyme GlgB (638 aa).

Aspartate 320 acts as the Nucleophile in catalysis. Residue glutamate 373 is the Proton donor of the active site.

Belongs to the glycosyl hydrolase 13 family. GlgB subfamily. Monomer.

The catalysed reaction is Transfers a segment of a (1-&gt;4)-alpha-D-glucan chain to a primary hydroxy group in a similar glucan chain.. It participates in glycan biosynthesis; glycogen biosynthesis. Its function is as follows. Catalyzes the formation of the alpha-1,6-glucosidic linkages in glycogen by scission of a 1,4-alpha-linked oligosaccharide from growing alpha-1,4-glucan chains and the subsequent attachment of the oligosaccharide to the alpha-1,6 position. The chain is 1,4-alpha-glucan branching enzyme GlgB from Oleidesulfovibrio alaskensis (strain ATCC BAA-1058 / DSM 17464 / G20) (Desulfovibrio alaskensis).